Consider the following 427-residue polypeptide: Peptidase B (427 aa).

The Mn(2+) site is built by K195 and D200. The active site involves K207. Positions 218, 277, and 279 each coordinate Mn(2+). R281 is an active-site residue.

The protein belongs to the peptidase M17 family. In terms of assembly, homohexamer. Requires Mn(2+) as cofactor.

It localises to the cytoplasm. The enzyme catalyses Release of an N-terminal amino acid, Xaa, from a peptide or arylamide. Xaa is preferably Glu or Asp but may be other amino acids, including Leu, Met, His, Cys and Gln.. Functionally, probably plays an important role in intracellular peptide degradation. This is Peptidase B from Salmonella arizonae (strain ATCC BAA-731 / CDC346-86 / RSK2980).